The primary structure comprises 1106 residues: Protein shuttle craft (1106 aa).

2 disordered regions span residues 7–26 (QLTN…AMAD) and 189–371 (PAAA…KLSQ). Residues 189–201 (PAAATTNGNSTAS) are compositionally biased toward low complexity. Basic and acidic residues-rich tracts occupy residues 232–270 (NYER…RDSR) and 278–323 (RRSD…RDRI). Thr335 is modified (phosphothreonine). 4 positions are modified to phosphoserine: Ser336, Ser339, Ser343, and Ser354. A compositionally biased stretch (polar residues) spans 336-354 (SNESAHPSPEKQSQLQQIS). The RING-type; atypical zinc finger occupies 386–433 (CLVCVEAIKSHQPTWSCRNCYHMLHLKCTITWASSSKSEVGWRCPACQ). 8 consecutive NF-X1-type zinc fingers follow at residues 474–492 (CSHA…PCQA), 527–546 (CGEH…ACSE), 585–604 (CGHH…PCKL), 644–667 (CGKP…PCPK), 706–725 (CGKH…DCPL), 733–752 (CGKH…PCYR), 844–867 (CGGH…ICRQ), and 876–896 (CGHK…PCKE). Residues 1006–1071 (TKSVYETLTD…NRNVVATAHK (66 aa)) form the R3H domain.

The protein belongs to the NFX1 family. In terms of tissue distribution, ovaries and embryonic central nervous system.

The protein resides in the nucleus. Its function is as follows. Plays an essential role during the late stages of embryonic neurogenesis. May either fine-tune the guidance or the spatial maintenance of the migrating SNB and in nerve roots, which are composed of axons originating from distinct groups of motor neurons and may be required to either guide or maintain the position of these nerves along a direct and straight path to their ultimate targets in particular muscle fields. May play a role in egg chamber development and/or may confer essential maternal contributions to the early embryo. The chain is Protein shuttle craft (stc) from Drosophila melanogaster (Fruit fly).